A 546-amino-acid chain; its full sequence is CTP synthase (546 aa).

Residues 1-265 form an amidoligase domain region; that stretch reads MTKYIFVTGG…DDIIAEQLQL (265 aa). S13 lines the CTP pocket. S13 serves as a coordination point for UTP. ATP is bound by residues 14–19 and D71; that span reads SLGKGI. D71 and E139 together coordinate Mg(2+). CTP contacts are provided by residues 146-148, 186-191, and K222; these read DIE and KTKPTQ. UTP-binding positions include 186 to 191 and K222; that span reads KTKPTQ. One can recognise a Glutamine amidotransferase type-1 domain in the interval 290-542; sequence KIAMVGKYVD…VKAALAHQAD (253 aa). G351 is an L-glutamine binding site. The active-site Nucleophile; for glutamine hydrolysis is the C378. L-glutamine-binding positions include 379 to 382, E402, and R469; that span reads LGMQ. Catalysis depends on residues H515 and E517.

The protein belongs to the CTP synthase family. As to quaternary structure, homotetramer.

It carries out the reaction UTP + L-glutamine + ATP + H2O = CTP + L-glutamate + ADP + phosphate + 2 H(+). It catalyses the reaction L-glutamine + H2O = L-glutamate + NH4(+). The catalysed reaction is UTP + NH4(+) + ATP = CTP + ADP + phosphate + 2 H(+). Its pathway is pyrimidine metabolism; CTP biosynthesis via de novo pathway; CTP from UDP: step 2/2. Allosterically activated by GTP, when glutamine is the substrate; GTP has no effect on the reaction when ammonia is the substrate. The allosteric effector GTP functions by stabilizing the protein conformation that binds the tetrahedral intermediate(s) formed during glutamine hydrolysis. Inhibited by the product CTP, via allosteric rather than competitive inhibition. Its function is as follows. Catalyzes the ATP-dependent amination of UTP to CTP with either L-glutamine or ammonia as the source of nitrogen. Regulates intracellular CTP levels through interactions with the four ribonucleotide triphosphates. The chain is CTP synthase from Chromobacterium violaceum (strain ATCC 12472 / DSM 30191 / JCM 1249 / CCUG 213 / NBRC 12614 / NCIMB 9131 / NCTC 9757 / MK).